Here is a 535-residue protein sequence, read N- to C-terminus: MTKYIFVTGGVVSSLGKGITASSLGRLLKNRGLNVTIQKFDPYINVDPGTMSPYQHGEVFVTDDGAETDLDLGHYERFIDINLNKYSNVTTGKIYSTVLKKERRGDYLGGTVQVIPHITNEIKDRVFRAGKETHADVVITEIGGTVGDIESLPFLEAIRQIKSDVGRDNVMYIHCTLVPYLKAAGEMKTKPTQHSVKELRSLGIQPNVIVVRTEMPISQDMKDKIALFCDIDPKAVIEAGDADTLYSIPLDLQKQGLDSLVCSHLKLDCREADMEEWKELVKKVKNLSKTVTIALVGKYVELPDAYISVVESLRHAGYAFDADIQVKWINAEEVTEDNVADLVQNADGILVPGGFGDRGVEGKITTVKYAREQKIPFFGICLGMQVASIEYARNVLGLEGAHSAEIDPSTPYPIIDLLPEQKDIEDLGGTLRLGLYPCKLQEGSKAYQAYENEVVYERHRHRYEFNNEFRQQMEEAGFVFSGTSPDGRLVEIIELKDHPWFVASQFHPEFTSRPTRPQALFRDFVHASLKTSEKL.

The segment at 1-267 is amidoligase domain; it reads MTKYIFVTGG…DSLVCSHLKL (267 aa). Ser-13 lines the CTP pocket. Ser-13 provides a ligand contact to UTP. 14 to 19 serves as a coordination point for ATP; it reads SLGKGI. An L-glutamine-binding site is contributed by Tyr-54. Asp-71 contributes to the ATP binding site. The Mg(2+) site is built by Asp-71 and Glu-141. Residues 148 to 150, 188 to 193, and Lys-224 contribute to the CTP site; these read DIE and KTKPTQ. Residues 188–193 and Lys-224 each bind UTP; that span reads KTKPTQ. The Glutamine amidotransferase type-1 domain maps to 292–534; it reads TIALVGKYVE…VHASLKTSEK (243 aa). Gly-354 serves as a coordination point for L-glutamine. The active-site Nucleophile; for glutamine hydrolysis is Cys-381. Residues 382-385, Glu-405, and Arg-462 each bind L-glutamine; that span reads LGMQ. Catalysis depends on residues His-507 and Glu-509.

It belongs to the CTP synthase family. As to quaternary structure, homotetramer.

It carries out the reaction UTP + L-glutamine + ATP + H2O = CTP + L-glutamate + ADP + phosphate + 2 H(+). The catalysed reaction is L-glutamine + H2O = L-glutamate + NH4(+). The enzyme catalyses UTP + NH4(+) + ATP = CTP + ADP + phosphate + 2 H(+). The protein operates within pyrimidine metabolism; CTP biosynthesis via de novo pathway; CTP from UDP: step 2/2. Allosterically activated by GTP, when glutamine is the substrate; GTP has no effect on the reaction when ammonia is the substrate. The allosteric effector GTP functions by stabilizing the protein conformation that binds the tetrahedral intermediate(s) formed during glutamine hydrolysis. Inhibited by the product CTP, via allosteric rather than competitive inhibition. Catalyzes the ATP-dependent amination of UTP to CTP with either L-glutamine or ammonia as the source of nitrogen. Regulates intracellular CTP levels through interactions with the four ribonucleotide triphosphates. This chain is CTP synthase, found in Bacillus licheniformis (strain ATCC 14580 / DSM 13 / JCM 2505 / CCUG 7422 / NBRC 12200 / NCIMB 9375 / NCTC 10341 / NRRL NRS-1264 / Gibson 46).